The sequence spans 259 residues: Proteasome subunit alpha (259 aa).

The interval 226–259 is disordered; sequence LAEGSATSATSATPGEAEAPATAPEGDVDTGSNG. Positions 227 to 250 are enriched in low complexity; that stretch reads AEGSATSATSATPGEAEAPATAPE.

It belongs to the peptidase T1A family. As to quaternary structure, the 20S proteasome core is composed of 14 alpha and 14 beta subunits that assemble into four stacked heptameric rings, resulting in a barrel-shaped structure. The two inner rings, each composed of seven catalytic beta subunits, are sandwiched by two outer rings, each composed of seven alpha subunits. The catalytic chamber with the active sites is on the inside of the barrel. Has a gated structure, the ends of the cylinder being occluded by the N-termini of the alpha-subunits. Is capped by the proteasome-associated ATPase, ARC.

It localises to the cytoplasm. The protein operates within protein degradation; proteasomal Pup-dependent pathway. Its activity is regulated as follows. The formation of the proteasomal ATPase ARC-20S proteasome complex, likely via the docking of the C-termini of ARC into the intersubunit pockets in the alpha-rings, may trigger opening of the gate for substrate entry. Interconversion between the open-gate and close-gate conformations leads to a dynamic regulation of the 20S proteasome proteolysis activity. In terms of biological role, component of the proteasome core, a large protease complex with broad specificity involved in protein degradation. This is Proteasome subunit alpha from Streptosporangium roseum (strain ATCC 12428 / DSM 43021 / JCM 3005 / KCTC 9067 / NCIMB 10171 / NRRL 2505 / NI 9100).